The chain runs to 520 residues: MADSCADTVDGEIKGFSEGQQLNITKNEDLEQTKPQKEAIANTEESSACVSQIKQDLAPCKDPPTTTTASLEDDAKATSSASVTSKSQDESEVINSQSYTPSQSEATPSFSMASLEFSEENNGVPPDGPLSSAKSARDGNQVSVQENEGAVAGAMRPAEPTMPAYYFVKWITWKEKKTAVITQSENGPCPLIAIMNILLLRWKVKFPAQTEVVTTEELMAHLGECVLSIKPREKAEGMELNFQQNMSDAMAVLPKLSTGLDVNVRFTGVSDFEYTPECIVFDLLDIPLYHGWLVDPQSPEVVSAVGKLSYNQLVEKIIEFKHSTDSSQVSEGLIAEQFLESTATQLSYHGLCELNTTAKEGELSVFFRNNHFSTMIKHKGHLYLLVTDQGFLQEESVVWESLHNVEGDGNFCDSDFRLCHPSQKPSAAAAQPSTQQQQQMQIDQDYLVAMSLQQEQGEAPGPLSDLELARQLQQEEYQQPQTQQQQQQQPSAGQMRGQATSPQGGQRRREKKEETDCCIL.

Residues 1–155 are disordered; that stretch reads MADSCADTVD…ENEGAVAGAM (155 aa). A compositionally biased stretch (basic and acidic residues) spans 26–37; the sequence is KNEDLEQTKPQK. Residues 43-54 show a composition bias toward polar residues; that stretch reads TEESSACVSQIK. The span at 77–86 shows a compositional bias: low complexity; it reads ATSSASVTSK. 2 stretches are compositionally biased toward polar residues: residues 93-112 and 132-146; these read VINSQSYTPSQSEATPSFSM and SAKSARDGNQVSVQE. The Nucleophile role is filled by cysteine 189. Histidine 371 (proton acceptor) is an active-site residue. Disordered stretches follow at residues 422-441 and 467-520; these read SQKPSAAAAQPSTQQQQQMQ and ELAR…CCIL. A ubiquitin-binding domain (UBD) region spans residues 441–479; sequence QIDQDYLVAMSLQQEQGEAPGPLSDLELARQLQQEEYQQ. A compositionally biased stretch (low complexity) spans 469 to 498; that stretch reads ARQLQQEEYQQPQTQQQQQQQPSAGQMRGQ. Positions 511 to 520 are enriched in basic and acidic residues; sequence KKEETDCCIL.

This sequence belongs to the MINDY deubiquitinase family. FAM63 subfamily.

It catalyses the reaction Thiol-dependent hydrolysis of ester, thioester, amide, peptide and isopeptide bonds formed by the C-terminal Gly of ubiquitin (a 76-residue protein attached to proteins as an intracellular targeting signal).. Its function is as follows. Hydrolase that can specifically remove 'Lys-48'-linked conjugated ubiquitin from proteins. May play a regulatory role at the level of protein turnover. In Danio rerio (Zebrafish), this protein is Ubiquitin carboxyl-terminal hydrolase MINDY-1 (mindy1).